The chain runs to 854 residues: DNA mismatch repair protein MutS (854 aa).

Residues 1–21 (MTASDIQPTEPHTPPTPHADT) are disordered. Residue 658 to 665 (GPNASGKS) participates in ATP binding.

The protein belongs to the DNA mismatch repair MutS family.

Its function is as follows. This protein is involved in the repair of mismatches in DNA. It is possible that it carries out the mismatch recognition step. This protein has a weak ATPase activity. This chain is DNA mismatch repair protein MutS, found in Trichormus variabilis (strain ATCC 29413 / PCC 7937) (Anabaena variabilis).